The following is a 350-amino-acid chain: Holliday junction branch migration complex subunit RuvB (350 aa).

Positions 4 to 184 (TDRLIAAQPQ…FGIVQRLEFY (181 aa)) are large ATPase domain (RuvB-L). ATP contacts are provided by residues Ile23, Arg24, Gly65, Lys68, Thr69, Thr70, 131–133 (EDY), Arg174, Tyr184, and Arg221. Residue Thr69 participates in Mg(2+) binding. The interval 185-255 (AVEELTEIVV…IADQALNMLH (71 aa)) is small ATPAse domain (RuvB-S). The head domain (RuvB-H) stretch occupies residues 258–350 (RHGLDHMDRR…PLTPPGESDA (93 aa)). Arg294, Arg313, and Arg318 together coordinate DNA.

Belongs to the RuvB family. Homohexamer. Forms an RuvA(8)-RuvB(12)-Holliday junction (HJ) complex. HJ DNA is sandwiched between 2 RuvA tetramers; dsDNA enters through RuvA and exits via RuvB. An RuvB hexamer assembles on each DNA strand where it exits the tetramer. Each RuvB hexamer is contacted by two RuvA subunits (via domain III) on 2 adjacent RuvB subunits; this complex drives branch migration. In the full resolvosome a probable DNA-RuvA(4)-RuvB(12)-RuvC(2) complex forms which resolves the HJ.

The protein localises to the cytoplasm. The enzyme catalyses ATP + H2O = ADP + phosphate + H(+). Functionally, the RuvA-RuvB-RuvC complex processes Holliday junction (HJ) DNA during genetic recombination and DNA repair, while the RuvA-RuvB complex plays an important role in the rescue of blocked DNA replication forks via replication fork reversal (RFR). RuvA specifically binds to HJ cruciform DNA, conferring on it an open structure. The RuvB hexamer acts as an ATP-dependent pump, pulling dsDNA into and through the RuvAB complex. RuvB forms 2 homohexamers on either side of HJ DNA bound by 1 or 2 RuvA tetramers; 4 subunits per hexamer contact DNA at a time. Coordinated motions by a converter formed by DNA-disengaged RuvB subunits stimulates ATP hydrolysis and nucleotide exchange. Immobilization of the converter enables RuvB to convert the ATP-contained energy into a lever motion, pulling 2 nucleotides of DNA out of the RuvA tetramer per ATP hydrolyzed, thus driving DNA branch migration. The RuvB motors rotate together with the DNA substrate, which together with the progressing nucleotide cycle form the mechanistic basis for DNA recombination by continuous HJ branch migration. Branch migration allows RuvC to scan DNA until it finds its consensus sequence, where it cleaves and resolves cruciform DNA. The sequence is that of Holliday junction branch migration complex subunit RuvB from Chromohalobacter salexigens (strain ATCC BAA-138 / DSM 3043 / CIP 106854 / NCIMB 13768 / 1H11).